The sequence spans 419 residues: UDP-N-acetylglucosamine 1-carboxyvinyltransferase (419 aa).

23 to 24 lines the phosphoenolpyruvate pocket; that stretch reads KN. R92 contributes to the UDP-N-acetyl-alpha-D-glucosamine binding site. C116 (proton donor) is an active-site residue. The residue at position 116 (C116) is a 2-(S-cysteinyl)pyruvic acid O-phosphothioketal. Residues 121-125, 161-164, D306, and I328 each bind UDP-N-acetyl-alpha-D-glucosamine; these read RPVDL and KVSV.

The protein belongs to the EPSP synthase family. MurA subfamily.

The protein resides in the cytoplasm. The catalysed reaction is phosphoenolpyruvate + UDP-N-acetyl-alpha-D-glucosamine = UDP-N-acetyl-3-O-(1-carboxyvinyl)-alpha-D-glucosamine + phosphate. It participates in cell wall biogenesis; peptidoglycan biosynthesis. Functionally, cell wall formation. Adds enolpyruvyl to UDP-N-acetylglucosamine. This chain is UDP-N-acetylglucosamine 1-carboxyvinyltransferase, found in Vibrio cholerae serotype O1 (strain ATCC 39541 / Classical Ogawa 395 / O395).